The chain runs to 251 residues: MNLNSIPAFQDNYIWVLTNDEGRCVIVDPGEAAPVLKAIAEHKWMPEAIFLTHHHHDHVGGVKELLQHFPQMTVYGPAETQDKGATHLVGDGDTIRVLGEKFTLFATPGHTLGHVFYFSHPYLFCGDTLFSGGCGRLFEGTPSQMYQSLMKINSLPDDTLICCAHEYTLANIKFALSILPHDSFINEYYRKVKELRVKKQMTLPVILKNERKINLFLRTENIDLINEINKETILQQPEARFAWLRSKKDTF.

7 residues coordinate Zn(2+): His-53, His-55, Asp-57, His-58, His-110, Asp-127, and His-165.

This sequence belongs to the metallo-beta-lactamase superfamily. Glyoxalase II family. In terms of assembly, monomer. The cofactor is Zn(2+).

It carries out the reaction an S-(2-hydroxyacyl)glutathione + H2O = a 2-hydroxy carboxylate + glutathione + H(+). It participates in secondary metabolite metabolism; methylglyoxal degradation; (R)-lactate from methylglyoxal: step 2/2. Functionally, thiolesterase that catalyzes the hydrolysis of S-D-lactoyl-glutathione to form glutathione and D-lactic acid. In Salmonella paratyphi C (strain RKS4594), this protein is Hydroxyacylglutathione hydrolase.